A 428-amino-acid chain; its full sequence is D-amino acid dehydrogenase (428 aa).

3–17 (VVILGSGVVGVASAY) lines the FAD pocket.

This sequence belongs to the DadA oxidoreductase family. FAD serves as cofactor.

It carries out the reaction a D-alpha-amino acid + A + H2O = a 2-oxocarboxylate + AH2 + NH4(+). It participates in amino-acid degradation; D-alanine degradation; NH(3) and pyruvate from D-alanine: step 1/1. In terms of biological role, oxidative deamination of D-amino acids. The polypeptide is D-amino acid dehydrogenase (Burkholderia pseudomallei (strain 1106a)).